A 188-amino-acid chain; its full sequence is Inosine triphosphate pyrophosphatase (188 aa).

7 to 12 contacts ITP; the sequence is TGNAGK. Glu-36 contributes to the Mg(2+) binding site. Residues Lys-48, 64–65, Lys-81, 140–143, Lys-163, and 168–169 each bind ITP; these read DT, FGWN, and HR.

Belongs to the HAM1 NTPase family. Homodimer. Mg(2+) is required as a cofactor. Requires Mn(2+) as cofactor.

It is found in the cytoplasm. The protein resides in the nucleus. The catalysed reaction is ITP + H2O = IMP + diphosphate + H(+). It carries out the reaction dITP + H2O = dIMP + diphosphate + H(+). The enzyme catalyses XTP + H2O = XMP + diphosphate + H(+). Its function is as follows. Pyrophosphatase that hydrolyzes non-canonical purine nucleotides such as inosine triphosphate (ITP), deoxyinosine triphosphate (dITP) or xanthosine 5'-triphosphate (XTP) to their respective monophosphate derivatives. The enzyme does not distinguish between the deoxy- and ribose forms. Probably excludes non-canonical purines from RNA and DNA precursor pools, thus preventing their incorporation into RNA and DNA and avoiding chromosomal lesions. This chain is Inosine triphosphate pyrophosphatase, found in Yarrowia lipolytica (strain CLIB 122 / E 150) (Yeast).